The primary structure comprises 249 residues: MTRYKATISYDGYAFAGFQRQSHARSVQEEIEKTLTRLNKGQTITVHGAGRTDSGVHALGQVIHFDLPYQMDEEKLRFALDTQSPEDIDVISIELVADDFHCRYAKHSKTYEFIVDRGRPKNPMRRHYATHFPYPLDVERMQIAIKKLEGTHDFTGFTASGTSVEDKVRTITEASLIVDETGQFLTFTFSGNGFLYKQIRNMVGTLLKIGNNRMPVEQIDLILEKKDRQLAGPTAAPNGLYLKEIRYEE.

Asp-53 functions as the Nucleophile in the catalytic mechanism. Residue Tyr-111 coordinates substrate.

Belongs to the tRNA pseudouridine synthase TruA family. Homodimer.

The catalysed reaction is uridine(38/39/40) in tRNA = pseudouridine(38/39/40) in tRNA. Its function is as follows. Formation of pseudouridine at positions 38, 39 and 40 in the anticodon stem and loop of transfer RNAs. The sequence is that of tRNA pseudouridine synthase A from Streptococcus pneumoniae serotype 2 (strain D39 / NCTC 7466).